Here is a 1275-residue protein sequence, read N- to C-terminus: MSKSLKKKSHWTSKVHESVIGRNPEGQLGFELKGGAENGQFPYLGEVKPGKVAYESGSKLVSEELLLEVNETPVAGLTIRDVLAVIKHCKDPLRLKCVKQGGIVDKDLRHYLNLRFQKGSVDHELQQIIRDNLYLRTVPCTTRPHKEGEVPGVDYIFITVEEFMELEKSGALLESGTYEDNYYGTPKPPAEPAPLLNVTDQILPGATPSAEGKRKRNKSVTNMEKASIEPPEEEEEERPVVNGNGVVITPESSEHEDKSAGASGETPSQPYPAPVYSQPEELKDQMDDTKPTKPEENEDSDPLPDNWEMAYTEKGEVYFIDHNTKTTSWLDPRLAKKAKPPEECKENELPYGWEKIDDPIYGTYYVDHINRRTQFENPVLEAKRKLQQHNMPHTELGAKPLQAPGFREKPLFTRDASQLKGTFLSTTLKKSNMGFGFTIIGGDEPDEFLQVKSVIPDGPAAQDGKMETGDVIVYINEVCVLGHTHADVVKLFQSVPIGQSVNLVLCRGYPLPFDPEDPANSMVPPLAIMERPPPVMVNGRHNYETYLEYISRTSQSVPDITDRPPHSLHSMPADGQLDGTYPPPVHDDNVSMASSGATQAELMTLTIVKGAQGFGFTIADSPTGQRVKQILDIQGCPGLCEGDLIVEINQQNVQNLSHTEVVDILKDCPVGSETSLIIHRGGFFSPWKTPKPMMDRWENQGSPQTSLSAPAVPQNLPFPPALHRSSFPDSTEAFDPRKPDPYELYEKSRAIYESRQQVPPRTSFRMDSSGPDYKELDVHLRRMESGFGFRILGGDEPGQPILIGAVIAMGSADRDGRLHPGDELVYVDGIPVAGKTHRYVIDLMHHAARNGQVNLTVRRKVLCGGEPCPENGRSPGSVSTHHSSPRSDYATYSNSNHAAPSSNASPPEGFASHSLQTSDVVIHRKENEGFGFVIISSLNRPESGATITVPHKIGRIIDGSPADRCAKLKVGDRILAVNGQSIINMPHADIVKLIKDAGLSVTLRIIPQEELNSPTSAPSSEKQSPMAQQHSPLAQQSPLAQPSPATPNSPVAQPAPPQPLQLQGHENSYRSEVKARQDVKPDIRQPPFTDYRQPPLDYRQPPGGDYSQPPPLDYRQHSPDTRQYPLSDYRQPQDFDYFTVDMEKGAKGFGFSIRGGREYKMDLYVLRLAEDGPAIRNGRMRVGDQIIEINGESTRDMTHARAIELIKSGGRRVRLLLKRGTGQVPEYGMVPSSLSMCMKSDKHGSPYFYLLGHPKDTTNPTPGVLPLPPPQACRK.

The PDZ 1 domain maps to 17 to 101; that stretch reads ESVIGRNPEG…PLRLKCVKQG (85 aa). In terms of domain architecture, Guanylate kinase-like spans 109 to 283; it reads RHYLNLRFQK…PVYSQPEELK (175 aa). The disordered stretch occupies residues 203-305; the sequence is LPGATPSAEG…ENEDSDPLPD (103 aa). Positions 280–295 are enriched in basic and acidic residues; sequence EELKDQMDDTKPTKPE. 2 consecutive WW domains span residues 301-334 and 347-380; these read DPLPDNWEMAYTEKGEVYFIDHNTKTTSWLDPRL and NELPYGWEKIDDPIYGTYYVDHINRRTQFENPVL. The interval 301–380 is interaction with DDN; sequence DPLPDNWEMA…RRTQFENPVL (80 aa). The residue at position 361 (Y361) is a Phosphotyrosine. PDZ domains lie at 425–509 and 604–682; these read STTL…CRGY and TLTI…HRGG. Position 685 is a phosphoserine (S685). A disordered region spans residues 698-740; that stretch reads ENQGSPQTSLSAPAVPQNLPFPPALHRSSFPDSTEAFDPRKPD. The segment covering 699-708 has biased composition (polar residues); the sequence is NQGSPQTSLS. Residues 777 to 859 enclose the PDZ 4 domain; sequence DVHLRRMESG…NGQVNLTVRR (83 aa). Y826 carries the post-translational modification Phosphotyrosine. Residues 868–912 are disordered; sequence CPENGRSPGSVSTHHSSPRSDYATYSNSNHAAPSSNASPPEGFAS. Residues S883 and S884 each carry the phosphoserine modification. Positions 893–907 are enriched in low complexity; sequence SNSNHAAPSSNASPP. One can recognise a PDZ 5 domain in the interval 919-1009; it reads DVVIHRKENE…SVTLRIIPQE (91 aa). Polar residues predominate over residues 1010–1040; that stretch reads ELNSPTSAPSSEKQSPMAQQHSPLAQQSPLA. The interval 1010 to 1128 is disordered; it reads ELNSPTSAPS…PDTRQYPLSD (119 aa). S1013 is modified (phosphoserine). Over residues 1067 to 1083 the composition is skewed to basic and acidic residues; that stretch reads NSYRSEVKARQDVKPDI. A PDZ 6 domain is found at 1139 to 1221; the sequence is TVDMEKGAKG…RVRLLLKRGT (83 aa).

It belongs to the MAGUK family. In terms of assembly, interacts (via its WW domains) with DRPLA. Interacts (via its second PDZ domain) with PTEN (via unphosphorylated C-terminus); this interaction diminishes the degradation rate of PTEN. Interacts (via guanylate kinase domain) with DLGAP1. Interacts (via the PDZ domains) with GRIN2A, GRID2 and NLGN1. Interacts with CTNND2, CTNNB1 and MAGUIN-1. Interacts with ACVR2A, SMAD2 and SMAD3. Part of a complex consisting of MAGI2/ARIP1, ACVR2A, ACVR1B and SMAD3. May interact with HTR2A. Interacts with RAPGEF2. Identified in a complex with ACTN4, CASK, IQGAP1, NPHS1, SPTAN1 and SPTBN1. Interacts with DDN. Found in a complex, at least composed of KIDINS220, MAGI2, NTRK1 and RAPGEF2; the complex is mainly formed at late endosomes in a NGF-dependent manner. Interacts with RAPGEF2; the interaction occurs before or after nerve growth factor (NGF) stimulation. Interacts (via PDZ domain) with KIDINS220 (via C-terminal domain). Interacts with IGSF9 and HTR4. Interacts with DLL1. Found in a complex with IGSF9B and NLGN2; the interaction with IGSF9B is mediated via the PDZ 5 and PDZ 6 domains, while the interaction with NLGN2 is mediated via the WW1, WW2 and PDZ2 domains. Interacts (via PDZ 6 domain) with USH1G (via SAM domain); the interaction is triggered by phosphorylation of USH1G by CK2 and negatively regulates MAGI2-mediated endocytosis. In terms of tissue distribution, expressed throughout the retina except in the nuclear layers and the photoreceptor outer segments (at protein level). Highest retinal expression is observed in the outer plexiform layer, the outer limiting membrane and the inner segment of photoreceptor cells (at protein level). Expressed in brain.

The protein localises to the cytoplasm. The protein resides in the late endosome. It localises to the synapse. It is found in the synaptosome. Its subcellular location is the cell membrane. The protein localises to the cytoskeleton. The protein resides in the microtubule organizing center. It localises to the centrosome. It is found in the cell projection. Its subcellular location is the cilium. The protein localises to the centriole. The protein resides in the photoreceptor inner segment. It localises to the photoreceptor outer segment. Seems to act as a scaffold molecule at synaptic junctions by assembling neurotransmitter receptors and cell adhesion proteins. Plays a role in nerve growth factor (NGF)-induced recruitment of RAPGEF2 to late endosomes and neurite outgrowth. May play a role in regulating activin-mediated signaling in neuronal cells. Enhances the ability of PTEN to suppress AKT1 activation. Plays a role in receptor-mediated clathrin-dependent endocytosis which is required for ciliogenesis. This chain is Membrane-associated guanylate kinase, WW and PDZ domain-containing protein 2 (Magi2), found in Mus musculus (Mouse).